Consider the following 92-residue polypeptide: Putative pterin-4-alpha-carbinolamine dehydratase (92 aa).

This sequence belongs to the pterin-4-alpha-carbinolamine dehydratase family.

It catalyses the reaction (4aS,6R)-4a-hydroxy-L-erythro-5,6,7,8-tetrahydrobiopterin = (6R)-L-erythro-6,7-dihydrobiopterin + H2O. The polypeptide is Putative pterin-4-alpha-carbinolamine dehydratase (Picosynechococcus sp. (strain ATCC 27264 / PCC 7002 / PR-6) (Agmenellum quadruplicatum)).